We begin with the raw amino-acid sequence, 239 residues long: Phosducin-like protein 3 (239 aa).

Met-1 is subject to N-acetylmethionine. The Phosducin domain occupies 32-180 (EAEEEQRILQ…EGDIKAQFIG (149 aa)). Phosphoserine is present on Ser-43. The interval 91–239 (FGEVLEISGK…MKRDSDSEGD (149 aa)) is thioredoxin fold. 2 interaction with XIAP regions span residues 97-99 (ISG) and 153-155 (TCI). Phosphoserine occurs at positions 234 and 236.

The protein belongs to the phosducin family. As to quaternary structure, interacts (via thioredoxin fold region) with KDR/VEGFR2 (via juxtamembrane domain). Forms ternary complexes with the chaperonin CCT complex and actin substrate, leading to inhibition of actin folding. Interacts with XIAP (via BIR 3 and RING domain). Interacts with HSP90AA1 and HSP90AB1. Post-translationally, N-terminal methionine acetylation destabilizes the protein. As to expression, expressed in endothelial cells (at protein level). Expressed in all tissues examined including spleen, thymus, prostate, testis, ovary, small intestine and colon.

Its subcellular location is the cytoplasm. It localises to the perinuclear region. It is found in the endoplasmic reticulum. Acts as a chaperone for the angiogenic VEGF receptor KDR/VEGFR2, increasing its abundance by inhibiting its ubiquitination and degradation. Inhibits the folding activity of the chaperonin-containing T-complex (CCT) which leads to inhibition of cytoskeletal actin folding. Acts as a chaperone during heat shock alongside HSP90 and HSP40/70 chaperone complexes. Modulates the activation of caspases during apoptosis. The polypeptide is Phosducin-like protein 3 (PDCL3) (Homo sapiens (Human)).